Reading from the N-terminus, the 360-residue chain is Type II methyltransferase M2.ScrFI (360 aa).

One can recognise an SAM-dependent MTase C5-type domain in the interval 2 to 360 (LRVFEAFAGY…SLFKELFKSQ (359 aa)). Residue C127 is part of the active site.

The protein belongs to the class I-like SAM-binding methyltransferase superfamily. C5-methyltransferase family.

The enzyme catalyses a 2'-deoxycytidine in DNA + S-adenosyl-L-methionine = a 5-methyl-2'-deoxycytidine in DNA + S-adenosyl-L-homocysteine + H(+). In terms of biological role, a methylase, recognizes the double-stranded sequence 5'-CCNGG-3', methylates C-2 on both strands, and protects the DNA from cleavage by the ScrFI endonuclease. This Lactococcus lactis subsp. cremoris (Streptococcus cremoris) protein is Type II methyltransferase M2.ScrFI (scrFIBM).